We begin with the raw amino-acid sequence, 110 residues long: UPF0060 membrane protein SACE_5620 (110 aa).

The next 4 helical transmembrane spans lie at 8-28 (VVLFVLAAVAEIGGAWLVWQG), 34-54 (GLLWIGAGVIALGIYGFVATF), 63-83 (ILAAYGGVFVAGSLLWGVVVD), and 89-109 (RWDLIGATICLAGVAVIMYAP).

This sequence belongs to the UPF0060 family.

It is found in the cell membrane. In Saccharopolyspora erythraea (strain ATCC 11635 / DSM 40517 / JCM 4748 / NBRC 13426 / NCIMB 8594 / NRRL 2338), this protein is UPF0060 membrane protein SACE_5620.